Reading from the N-terminus, the 196-residue chain is Imidazoleglycerol-phosphate dehydratase (196 aa).

It belongs to the imidazoleglycerol-phosphate dehydratase family.

It is found in the cytoplasm. It catalyses the reaction D-erythro-1-(imidazol-4-yl)glycerol 3-phosphate = 3-(imidazol-4-yl)-2-oxopropyl phosphate + H2O. It participates in amino-acid biosynthesis; L-histidine biosynthesis; L-histidine from 5-phospho-alpha-D-ribose 1-diphosphate: step 6/9. This chain is Imidazoleglycerol-phosphate dehydratase, found in Desulforamulus reducens (strain ATCC BAA-1160 / DSM 100696 / MI-1) (Desulfotomaculum reducens).